A 268-amino-acid chain; its full sequence is Probable 6-phosphogluconolactonase 1 (268 aa).

The protein belongs to the glucosamine/galactosamine-6-phosphate isomerase family. 6-phosphogluconolactonase subfamily.

The protein localises to the cytoplasm. The protein resides in the cytosol. It catalyses the reaction 6-phospho-D-glucono-1,5-lactone + H2O = 6-phospho-D-gluconate + H(+). It participates in carbohydrate degradation; pentose phosphate pathway; D-ribulose 5-phosphate from D-glucose 6-phosphate (oxidative stage): step 2/3. Catalyzes the hydrolysis of 6-phosphogluconolactone to 6-phosphogluconate. The protein is Probable 6-phosphogluconolactonase 1 of Arabidopsis thaliana (Mouse-ear cress).